The following is a 585-amino-acid chain: MQKLQENDLSTSQTFKRLWPTIAPFKIGLIAAAAALVLNALTDSGLIYLLKPLLDDGFGKADTSFLKLMAVLVIVFIFIRGITSFISSYCLAWVSGKVVMTMRRRLFKHLMYMPVSFFDQNSTGRLLSRITYDSEQVANSSSNALVTIVREGAYIISLLAVMIATSWQLSVVLFIIGPVIAVLIRLVSKIFRRLSKNMQNSMGELTATAEQMLKGHKVVLSFGGQQIEEQRFNEVSNDMRRKGMKMVVADAISDPIVQIIASLALSAVLYLATIPSIMSQNLSAGSFTVVFSSMLAMLRPLKSLTNVNSQFQRGMAACQTLFDILDLDTEKDKGKYEAERVKGDVSFKDVSFTYQGKDQPALKHLSFDIPHGKTFALVGRSGSGKSTIANLVTRFYDINQGEILLDGVNVQDYTLSNLRTHCSVVSQQVHLFNDTIANNIAYAAKDKYSREQIIAAAKAAHAMEFIEPLENGLDTVIGENGASLSGGQRQRLAIARALLRDSPVLILDEATSALDTESERAIQAALEELQKDRTVLVIAHRLSTIEKADEILVIDHGEICERGSHEELLALNGAYKQLHKMQFNG.

The next 6 membrane-spanning stretches (helical) occupy residues 18-38, 68-88, 142-162, 163-183, 255-275, and 277-297; these read LWPT…ALVL, LMAV…FISS, SNAL…LAVM, IATS…IAVL, PIVQ…ATIP, and IMSQ…MLAM. Positions 30–313 constitute an ABC transmembrane type-1 domain; sequence IAAAAALVLN…LTNVNSQFQR (284 aa). The region spanning 345-581 is the ABC transporter domain; it reads VSFKDVSFTY…NGAYKQLHKM (237 aa). 379–386 contributes to the ATP binding site; it reads GRSGSGKS.

The protein belongs to the ABC transporter superfamily. Lipid exporter (TC 3.A.1.106) family. As to quaternary structure, homodimer.

It localises to the cell inner membrane. The catalysed reaction is ATP + H2O + lipid A-core oligosaccharideSide 1 = ADP + phosphate + lipid A-core oligosaccharideSide 2.. In terms of biological role, involved in lipopolysaccharide (LPS) biosynthesis. Translocates lipid A-core from the inner to the outer leaflet of the inner membrane. Transmembrane domains (TMD) form a pore in the inner membrane and the ATP-binding domain (NBD) is responsible for energy generation. The chain is ATP-dependent lipid A-core flippase from Mannheimia succiniciproducens (strain KCTC 0769BP / MBEL55E).